A 369-amino-acid polypeptide reads, in one-letter code: P2X receptor B (369 aa).

Topologically, residues 1–25 (MTIDWDSILSYNTIKVVRIRDRRLG) are cytoplasmic. The helical transmembrane segment at 26-46 (ILHLCFLIVIVLYVVVYSAII) threads the bilayer. At 47 to 369 (KKGYVTTEEP…DKLYHNIEAL (323 aa)) the chain is on the lumenal side. The tract at residues 283–296 (RHAIRLIFIQTGVI) is pore-forming motif.

The protein belongs to the P2X receptor family.

It localises to the contractile vacuole membrane. Its function is as follows. P2X receptors are ATP-gated ion channels that play a role in intracellular calcium signaling. Not required for the purinergic response to extracellular nucleotides. Not essential for osmoregulation. Inward currents are evoked by intracellular ATP and ATP analogs. Insensitive to the P2 receptor antagonists PPADS and suramin, and also copper ions. Inhibited by sodium ions. Permeable to chloride ions. The chain is P2X receptor B (p2xB) from Dictyostelium discoideum (Social amoeba).